Here is a 322-residue protein sequence, read N- to C-terminus: Undecaprenyl-phosphate 4-deoxy-4-formamido-L-arabinose transferase (322 aa).

The Cytoplasmic portion of the chain corresponds to 1–235 (MFEIHPVKKV…TCLTTTPLRM (235 aa)). A helical membrane pass occupies residues 236–256 (LSLLGSIIAIGGFSIAVLLVI). The Periplasmic portion of the chain corresponds to 257–269 (LRLTFGPQWAAEG). Residues 270-290 (VFMLFAVLFTFIGAQFIGMGL) form a helical membrane-spanning segment. Residues 291–322 (LGEYIGRIYTDVRARPRYFVQQVIRPSSKENE) lie on the Cytoplasmic side of the membrane.

This sequence belongs to the glycosyltransferase 2 family.

Its subcellular location is the cell inner membrane. It catalyses the reaction UDP-4-deoxy-4-formamido-beta-L-arabinose + di-trans,octa-cis-undecaprenyl phosphate = 4-deoxy-4-formamido-alpha-L-arabinopyranosyl di-trans,octa-cis-undecaprenyl phosphate + UDP. It functions in the pathway glycolipid biosynthesis; 4-amino-4-deoxy-alpha-L-arabinose undecaprenyl phosphate biosynthesis; 4-amino-4-deoxy-alpha-L-arabinose undecaprenyl phosphate from UDP-4-deoxy-4-formamido-beta-L-arabinose and undecaprenyl phosphate: step 1/2. It participates in bacterial outer membrane biogenesis; lipopolysaccharide biosynthesis. Its function is as follows. Catalyzes the transfer of 4-deoxy-4-formamido-L-arabinose from UDP to undecaprenyl phosphate. The modified arabinose is attached to lipid A and is required for resistance to polymyxin and cationic antimicrobial peptides. The protein is Undecaprenyl-phosphate 4-deoxy-4-formamido-L-arabinose transferase of Escherichia coli O45:K1 (strain S88 / ExPEC).